The sequence spans 205 residues: CASP-like protein 2A1 (205 aa).

Residues 1 to 35 (MMGDKGEKECATASSPIELGCGEGDESGNKSSMRT) are Cytoplasmic-facing. Residues 36 to 56 (VETLLRLVPVALCTVSLVVML) traverse the membrane as a helical segment. Topologically, residues 57-77 (KNSQTNDFGSLSYSDLGAFRY) are extracellular. The chain crosses the membrane as a helical span at residues 78 to 98 (LVHANGICAGYSLLSAIFTAM). Over 99-106 (PRPPTMSR) the chain is Cytoplasmic. A helical membrane pass occupies residues 107-127 (AWTFFLLDQVLTYLILAAGAV). Residues 128–157 (STEVVYLAYKGDEAVTWSDACSSFGGFCQK) lie on the Extracellular side of the membrane. The helical transmembrane segment at 158-178 (TTASISITFVTVLCYAVLSLI) threads the bilayer. The Cytoplasmic segment spans residues 179 to 205 (SSYKLFSKYDAPICFNGKGIEIAAFHS).

Belongs to the Casparian strip membrane proteins (CASP) family. In terms of assembly, homodimer and heterodimers.

It is found in the cell membrane. This is CASP-like protein 2A1 from Vitis vinifera (Grape).